The chain runs to 244 residues: Chlorosome protein I (244 aa).

Residues 1-95 (MNLIINDKTA…TVKVLSRPEE (95 aa)) form the 2Fe-2S ferredoxin-type domain. [2Fe-2S] cluster is bound by residues C33, C39, C42, and C77.

[2Fe-2S] cluster is required as a cofactor.

The protein localises to the chlorosome. Functionally, could play a direct role in the oxidation or reduction of the quenching species formed in the chlorosome. The polypeptide is Chlorosome protein I (csmI) (Chlorobaculum tepidum (strain ATCC 49652 / DSM 12025 / NBRC 103806 / TLS) (Chlorobium tepidum)).